Here is a 95-residue protein sequence, read N- to C-terminus: FXYD domain-containing ion transport regulator 6 (95 aa).

A signal peptide spans 1 to 18 (MELVLVFLCSLLAPTVLA). The Extracellular portion of the chain corresponds to 19-35 (SAAEKEKEMDPFHYDYQ). The chain crosses the membrane as a helical span at residues 36-58 (TLRIGGLVFAVVLFSVGILLILS). Residues 59 to 95 (RRCKCSFNQKPRAPGDEEAQVENLITANATEPQKAEN) are Cytoplasmic-facing.

It belongs to the FXYD family. In terms of assembly, regulatory subunit of the sodium/potassium-transporting ATPase which is composed of a catalytic alpha subunit, a non-catalytic beta subunit and an additional regulatory subunit. The regulatory subunit, a member of the FXYD protein family, modulates the enzymatic activity in a tissue- and isoform-specific way by changing affinities of the Na+/K+-ATPase toward Na(+), K(+) or ATP.

The protein resides in the cell membrane. Its function is as follows. Associates with and regulates the activity of the sodium/potassium-transporting ATPase (NKA) which catalyzes the hydrolysis of ATP coupled with the exchange of Na(+) and K(+) ions across the plasma membrane. Reduces the apparent affinity for intracellular Na(+) with no change in the apparent affinity for extracellular K(+). In addition to modulating NKA kinetics, may also function as a regulator of NKA localization to the plasma membrane. This Pongo abelii (Sumatran orangutan) protein is FXYD domain-containing ion transport regulator 6 (FXYD6).